The sequence spans 103 residues: N(4)-acetylcytidine amidohydrolase (103 aa).

One can recognise an ASCH domain in the interval 6 to 94; that stretch reads ITFFQRFQND…IAEIYPNQTQ (89 aa). Catalysis depends on Lys21, which acts as the Proton acceptor. Thr24 acts as the Nucleophile in catalysis. The Proton donor role is filled by Glu74.

Belongs to the N(4)-acetylcytidine amidohydrolase family.

The enzyme catalyses N(4)-acetylcytidine + H2O = cytidine + acetate + H(+). It catalyses the reaction N(4)-acetyl-2'-deoxycytidine + H2O = 2'-deoxycytidine + acetate + H(+). It carries out the reaction N(4)-acetylcytosine + H2O = cytosine + acetate + H(+). In terms of biological role, catalyzes the hydrolysis of N(4)-acetylcytidine (ac4C). The sequence is that of N(4)-acetylcytidine amidohydrolase (yqfB) from Salmonella typhi.